Consider the following 119-residue polypeptide: UPF0102 protein HI_1656 (119 aa).

The protein belongs to the UPF0102 family.

The sequence is that of UPF0102 protein HI_1656 from Haemophilus influenzae (strain ATCC 51907 / DSM 11121 / KW20 / Rd).